The primary structure comprises 322 residues: Tlg2p-like protein a (322 aa).

Topologically, residues 1–301 (MATRNRTLLF…QRHGGMVKCA (301 aa)) are cytoplasmic. A coiled-coil region spans residues 116 to 146 (KEDQHNIESLTQEITFLLKKSEKQLQRLSAS). A t-SNARE coiled-coil homology domain is found at 226–288 (EEVSVEREKE…EDGLKQLQKA (63 aa)). A helical; Anchor for type IV membrane protein transmembrane segment spans residues 302–322 (SVLVILCFIMLLLLILKEIFL).

The protein belongs to the syntaxin family. In terms of assembly, interacts with VTI12 and SYP61 to form a t-SNARE complex and with VPS45. Interacts with TNO1. Binds to YKT61 and YKT62. Core constituent of the SNARE complex required for membrane fusion at the trans-Golgi network. As to expression, mostly expressed in flowers, to a lower extent in leaves and roots, and, at low levels, in stems.

The protein localises to the golgi apparatus. The protein resides in the trans-Golgi network membrane. In terms of biological role, contributes to the regulation of secretory and vacuolar transport pathways in the post-Golgi network, and to the maintenance of the Golgi apparatus and trans-Golgi network (TGN) morphologies. Together with VTI12, required for membrane fusion. Vesicle trafficking protein that functions in the secretory pathway and mediates liposome fusion; the fusion of phospholipid vesicles containing SYP41 and VTI12 is triggered by YKT61 and YKT62. Required for extracellular resistance responses to a fungal pathogen. Also involved in the protection of chloroplasts from salicylic acid-dependent biotic stress. The polypeptide is Tlg2p-like protein a (Arabidopsis thaliana (Mouse-ear cress)).